A 126-amino-acid chain; its full sequence is MSDALVWQVIRNNSAFLRTQRGIGKRFSTEKFNLKKVNSPKYSGLANKHAIDVSAAAKGVVVSTKNEKGRPAKAVTTSTLSKTPVASVRRLAKNAGFNKFNKLAQRRAAAIVRSQVKKAKVQKTDA.

The residue at position 2 (Ser-2) is an N-acetylserine.

Belongs to the eukaryotic ribosomal protein eL28 family.

In Caenorhabditis elegans, this protein is Large ribosomal subunit protein eL28 (rpl-28).